A 132-amino-acid polypeptide reads, in one-letter code: Protein NrdI (132 aa).

The protein belongs to the NrdI family.

In terms of biological role, probably involved in ribonucleotide reductase function. In Staphylococcus aureus (strain Mu3 / ATCC 700698), this protein is Protein NrdI.